Consider the following 117-residue polypeptide: Large ribosomal subunit protein bL20 (117 aa).

It belongs to the bacterial ribosomal protein bL20 family.

Its function is as follows. Binds directly to 23S ribosomal RNA and is necessary for the in vitro assembly process of the 50S ribosomal subunit. It is not involved in the protein synthesizing functions of that subunit. This chain is Large ribosomal subunit protein bL20, found in Neorickettsia sennetsu (strain ATCC VR-367 / Miyayama) (Ehrlichia sennetsu).